Here is a 373-residue protein sequence, read N- to C-terminus: D-alanine--D-alanine ligase (373 aa).

The 208-residue stretch at 156–363 folds into the ATP-grasp domain; it reads KKLLAADGLP…YPTLLATMIE (208 aa). 184 to 239 is an ATP binding site; the sequence is CERLGLPVFVKPARGGSSIGVSRVSSWDQLPAAVARARRHDPKVIVEAAISGRELE. 3 residues coordinate Mg(2+): Asp-318, Glu-330, and Asn-332.

This sequence belongs to the D-alanine--D-alanine ligase family. The cofactor is Mg(2+). Requires Mn(2+) as cofactor.

It is found in the cytoplasm. It carries out the reaction 2 D-alanine + ATP = D-alanyl-D-alanine + ADP + phosphate + H(+). The protein operates within cell wall biogenesis; peptidoglycan biosynthesis. Functionally, cell wall formation. This Mycobacterium tuberculosis (strain ATCC 25177 / H37Ra) protein is D-alanine--D-alanine ligase.